The sequence spans 172 residues: Molybdopterin synthase catalytic subunit (172 aa).

At Ser-20 the chain carries Phosphoserine. Residues 127–128 (HR), Lys-143, and 150–152 (KKE) contribute to the substrate site.

It belongs to the MoaE family. MOCS2B subfamily. In terms of assembly, heterotetramer; composed of 2 small (MOCS2A) and 2 large (MOCS2B) subunits.

The protein localises to the cytoplasm. The protein resides in the cytosol. It catalyses the reaction 2 [molybdopterin-synthase sulfur-carrier protein]-C-terminal-Gly-aminoethanethioate + cyclic pyranopterin phosphate + H2O = molybdopterin + 2 [molybdopterin-synthase sulfur-carrier protein]-C-terminal Gly-Gly + 2 H(+). It functions in the pathway cofactor biosynthesis; molybdopterin biosynthesis. Catalytic subunit of the molybdopterin synthase complex, a complex that catalyzes the conversion of precursor Z into molybdopterin. Acts by mediating the incorporation of 2 sulfur atoms from thiocarboxylated MOCS2A into precursor Z to generate a dithiolene group. The polypeptide is Molybdopterin synthase catalytic subunit (Pongo abelii (Sumatran orangutan)).